A 355-amino-acid chain; its full sequence is 3-dehydroquinate synthase (355 aa).

NAD(+)-binding positions include 71–76, 105–109, 129–130, K142, and K151; these read EGEERK, GVVGD, and TS. Zn(2+)-binding residues include E184, H246, and H263.

The protein belongs to the sugar phosphate cyclases superfamily. Dehydroquinate synthase family. NAD(+) serves as cofactor. Co(2+) is required as a cofactor. The cofactor is Zn(2+).

Its subcellular location is the cytoplasm. The enzyme catalyses 7-phospho-2-dehydro-3-deoxy-D-arabino-heptonate = 3-dehydroquinate + phosphate. Its pathway is metabolic intermediate biosynthesis; chorismate biosynthesis; chorismate from D-erythrose 4-phosphate and phosphoenolpyruvate: step 2/7. Its function is as follows. Catalyzes the conversion of 3-deoxy-D-arabino-heptulosonate 7-phosphate (DAHP) to dehydroquinate (DHQ). This Streptococcus pneumoniae (strain ATCC BAA-255 / R6) protein is 3-dehydroquinate synthase.